Here is a 159-residue protein sequence, read N- to C-terminus: Transcriptional repressor NrdR (159 aa).

Polar residues predominate over residues 1 to 11 (MQCPTCQNTDS). The disordered stretch occupies residues 1–21 (MQCPTCQNTDSRVLESRSADS). The segment at 3–34 (CPTCQNTDSRVLESRSADSGKSVRRRRECLNC) is a zinc-finger region. One can recognise an ATP-cone domain in the interval 49 to 139 (VSVMKKDGSR…VYRKFNGVKD (91 aa)).

Belongs to the NrdR family. Requires Zn(2+) as cofactor.

Functionally, negatively regulates transcription of bacterial ribonucleotide reductase nrd genes and operons by binding to NrdR-boxes. The sequence is that of Transcriptional repressor NrdR from Prochlorococcus marinus (strain MIT 9215).